The following is a 199-amino-acid chain: MARCKS-related protein (199 aa).

Residues 1 to 199 (MGSQSSKAPR…PTPAGAEQNE (199 aa)) form a disordered region. Glycine 2 carries the N-myristoyl glycine lipid modification. Threonine 14 carries the phosphothreonine modification. A compositionally biased stretch (low complexity) spans 16 to 26 (EEAAGASPAKA). Phosphoserine occurs at positions 22, 36, and 48. Low complexity predominate over residues 53 to 64 (GTDEAAGATGDA). Serine 71 is subject to Phosphoserine. The span at 76–85 (AKGDAPPKET) shows a compositional bias: basic and acidic residues. Threonine 85 is modified (phosphothreonine). Over residues 86-98 (PKKKKKFSFKKPF) the composition is skewed to basic residues. Residues 87 to 110 (KKKKKFSFKKPFKLSGLSFKRNRK) form an effector domain involved in lipid-binding and calmodulin-binding region. A phosphoserine; by PKC mark is found at serine 93, serine 101, and serine 104. Serine 119 carries the phosphoserine modification. Residue serine 120 is modified to Phosphoserine; by MAPK8. Phosphoserine is present on serine 135. At threonine 148 the chain carries Phosphothreonine; by MAPK8. The residue at position 151 (serine 151) is a Phosphoserine. Positions 156–167 (AKGAEAGAACKG) are enriched in low complexity. Residue threonine 170 is modified to Phosphothreonine. Over residues 181–199 (STPSGPESGPTPAGAEQNE) the composition is skewed to low complexity. At threonine 182 the chain carries Phosphothreonine; by MAPK8. A Phosphothreonine modification is found at threonine 191.

The protein belongs to the MARCKS family. Binds to filamentous actin (F-actin), but not to monomeric G-actin, independently of its phosphorylation status. Interacts with calmodulin. Phosphorylated. Phosphorylation at Ser-120 and Thr-182 is non-redundantly catalyzed by MAPK8 in vivo. Phosphorylation at Thr-148 is preferentially catalyzed by MAPK8 in vivo, but this modification can also be catalyzed by other kinases in the absence of MAPK8. May be phosphorylated by protein kinase C, which disrupts the interaction with calmodulin.

The protein localises to the cytoplasm. Its subcellular location is the cytoskeleton. The protein resides in the cell membrane. Controls cell movement by regulating actin cytoskeleton homeostasis and filopodium and lamellipodium formation. When unphosphorylated, induces cell migration. When phosphorylated by MAPK8, induces actin bundles formation and stabilization, thereby reducing actin plasticity, hence restricting cell movement, including neuronal migration. May be involved in coupling the protein kinase C and calmodulin signal transduction systems. This Oryctolagus cuniculus (Rabbit) protein is MARCKS-related protein (MARCKSL1).